The primary structure comprises 50 residues: uncharacterized protein (50 aa).

This is an uncharacterized protein from Haemophilus influenzae (strain ATCC 51907 / DSM 11121 / KW20 / Rd).